Consider the following 431-residue polypeptide: C2H2 type master regulator of conidiophore development brlA (431 aa).

Disordered regions lie at residues 29-51 (MTSS…SHGS), 211-275 (TPQQ…SEEY), and 287-306 (IRTH…VRSN). Residues 30–48 (TSSFSPLESPTPTPTSLYS) are compositionally biased toward low complexity. Residues 225–265 (PSSNYSDFPASLQTFKPHTPSTPVRSLSLGTPRSDTPQSRM) show a composition bias toward polar residues. Positions 287–302 (IRTHRQPSRKPSKKQL) are enriched in basic residues. 2 C2H2-type zinc fingers span residues 321–345 (FKCK…MKSH) and 351–376 (HVCW…TKTH). Residues 390–412 (DETSPDYDPEFRGQLTPDGRPIY) form a disordered region.

It is found in the nucleus. In terms of biological role, brlA, abaA and wetA are pivotal regulators of conidiophore development and conidium maturation. They act individually and together to regulate their own expression and that of numerous other sporulation-specific genes. Binds promoters of target genes at brlA response elements (BREs) containing the conserved sequence 5'-(C/A)(A/G)AGGG(G/A)-3'. Regulates the expression levels of seven secondary metabolism gene clusters including a down-regulated cluster putatively involved in the biosynthesis of the mycotoxins roquefortine C and meleagrin. Negatively regulates the expression of cellulase genes. In Penicillium oxalicum (strain 114-2 / CGMCC 5302) (Penicillium decumbens), this protein is C2H2 type master regulator of conidiophore development brlA.